The following is a 205-amino-acid chain: TATA-box-binding protein (205 aa).

2 consecutive repeat copies span residues 27-103 (LQNI…ARII) and 117-194 (IQNI…YPVL).

Belongs to the TBP family. Belongs to the TFIID complex together with the TBP-associated factors (TAFs). Binds DNA as monomer.

It localises to the nucleus. General transcription factor that functions at the core of the DNA-binding multiprotein factor TFIID. Binding of TFIID to the TATA box is the initial transcriptional step of the pre-initiation complex (PIC), playing a role in the activation of eukaryotic genes transcribed by RNA polymerase II. This chain is TATA-box-binding protein (tbpA), found in Dictyostelium discoideum (Social amoeba).